We begin with the raw amino-acid sequence, 69 residues long: Alpha-conotoxin SrIA/SrIB (69 aa).

The first 21 residues, 1-21 (MGMRMMFTVFLLVVLATTVVS), serve as a signal peptide directing secretion. Positions 22–48 (FTSDSAFDSRNVAANDKVSDMIALTAR) are excised as a propeptide. Cystine bridges form between Cys51–Cys57 and Cys52–Cys65. Positions 53–55 (SRP) are ser-Xaa-Pro motif, crucial for potent interaction with nAChR. At Pro55 the chain carries 4-hydroxyproline; in form Sr1A and Sr1B. Glu60 is modified (4-carboxyglutamate; in form Sr1A). 4-carboxyglutamate; in form Sr1A and Sr1B is present on Glu63. Glycine amide; in form Sr1A and Sr1B is present on Gly66.

It belongs to the conotoxin A superfamily. Post-translationally, occurs in 2 forms which differ in the post-translational modification of Glu-60. In form SrA1 Glu-60 is 4-carboxyglutamate while in form SrA2 Glu-60 is unmodified. In terms of tissue distribution, expressed by the venom duct.

Its subcellular location is the secreted. Alpha-conotoxins act on postsynaptic membranes, they bind to the nicotinic acetylcholine receptors (nAChR) and thus inhibit them. Has weak blocking effects on muscle nAChR composed of alpha-1/beta-1/gamma/delta subunits and the central nervous system nAChR composed of alpha-4/beta-2 subunits. Does not detectably affect the peripheral nervous system nAChR composed of alpha-3/beta-4 subunits. Low toxin concentrations potentiate currents in muscle nAChR composed of alpha-1/beta-1/gamma/delta subunits and central nervous system nAChR composed of alpha-4/beta-2 subunits, but not the peripheral nervous system nAChR composed of alpha-3/beta-4 subunits. This chain is Alpha-conotoxin SrIA/SrIB, found in Conus spurius (Alphabet cone).